We begin with the raw amino-acid sequence, 304 residues long: Galactose 1-dehydrogenase (304 aa).

The protein belongs to the Gfo/Idh/MocA family. As to quaternary structure, homodimer.

The protein localises to the cytoplasm. The catalysed reaction is D-galactose + NAD(+) = D-galactono-1,4-lactone + NADH + H(+). It functions in the pathway carbohydrate metabolism; galactose metabolism. Catalyzes the dehydrogenation of D-galactose by either NAD(+) or NADP(+). Oxidizes following sugars in decreasing order: D-fucose &gt; D-galactose &gt; L-arabinose &gt; 2-deoxy-D-galactose &gt;&gt; 4-deoxy-D-galactose &gt; 2-deoxy-2-amino-D-galactose. This chain is Galactose 1-dehydrogenase (gal), found in Pseudomonas fluorescens.